The sequence spans 1141 residues: PR domain zinc finger protein 15 (1141 aa).

An SET domain is found at 49-159 (PNLEIRRLED…PGTELRVWYA (111 aa)). The C2H2-type 1 zinc finger occupies 197 to 219 (WACKVCSATFLELQLLNEHLLGH). The disordered stretch occupies residues 224–283 (KSLPPGSQSEAAAPEKEQDTPRGEPPAVPESENVATKEQKKKPRRGRKPKVSKAEQPLVI). Over residues 236-245 (APEKEQDTPR) the composition is skewed to basic and acidic residues. Positions 262-274 (QKKKPRRGRKPKV) are enriched in basic residues. 4 C2H2-type zinc fingers span residues 372–394 (YQCN…VRSH), 399–422 (FKCE…SYKH), 460–482 (FQCE…KKKH), and 487–509 (FACE…QRRH). Lys517 participates in a covalent cross-link: Glycyl lysine isopeptide (Lys-Gly) (interchain with G-Cter in SUMO2). 2 consecutive C2H2-type zinc fingers follow at residues 536 to 558 (SGCP…LLTH) and 563 to 585 (YTCE…IHVH). A disordered region spans residues 604 to 623 (IGISSEENDDNSDESADSEP). Residues 609 to 620 (EENDDNSDESAD) are compositionally biased toward acidic residues. 9 consecutive C2H2-type zinc fingers follow at residues 626–649 (YSCK…MEVH), 654–676 (YGCS…MVIH), 690–712 (HPCE…KLIH), 718–740 (HACE…MRVH), 746–768 (YLCA…MKLH), 774–796 (YECK…CKRH), 802–824 (FMCE…KLIH), 830–853 (WTCS…QLTH), and 859–882 (QSCQ…RRKH). 2 disordered regions span residues 922–973 (AEGK…DETN) and 1108–1141 (QTDV…MYSY). Residues 927-938 (GKAAKRSHKRKQ) are compositionally biased toward basic residues. A compositionally biased stretch (low complexity) spans 1121 to 1141 (PQQAAQPQVQAEQQQQQMYSY).

It belongs to the class V-like SAM-binding methyltransferase superfamily. Detected in all tissues examined.

It localises to the nucleus. In terms of biological role, sequence-specific DNA-binding transcriptional regulator. Plays a role as a molecular node in a transcriptional network regulating embryonic development and cell fate decision. Stimulates the expression of upstream key transcriptional activators and repressors of the Wnt/beta-catenin and MAPK/ERK pathways, respectively, that are essential for naive pluripotency and self-renewal maintenance of embryonic stem cells (ESCs). Specifically promotes SPRY1 and RSPO1 transcription activation through recognition and direct binding of a specific DNA sequence in their promoter regions. Involved in early embryo development. Also plays a role in induced pluripotent stem cells (iPSCs) reprogramming. The sequence is that of PR domain zinc finger protein 15 from Homo sapiens (Human).